Here is a 219-residue protein sequence, read N- to C-terminus: 7-cyano-7-deazaguanine synthase (219 aa).

An ATP-binding site is contributed by 10–20 (FSGGQDSTTCL). Zn(2+) contacts are provided by Cys-188, Cys-197, Cys-200, and Cys-203.

Belongs to the QueC family. As to quaternary structure, homodimer. Zn(2+) is required as a cofactor.

It catalyses the reaction 7-carboxy-7-deazaguanine + NH4(+) + ATP = 7-cyano-7-deazaguanine + ADP + phosphate + H2O + H(+). The protein operates within purine metabolism; 7-cyano-7-deazaguanine biosynthesis. In terms of biological role, catalyzes the ATP-dependent conversion of 7-carboxy-7-deazaguanine (CDG) to 7-cyano-7-deazaguanine (preQ(0)). This is 7-cyano-7-deazaguanine synthase from Clostridium botulinum (strain Kyoto / Type A2).